Consider the following 283-residue polypeptide: NAD kinase (283 aa).

D66 functions as the Proton acceptor in the catalytic mechanism. NAD(+) contacts are provided by residues 66-67 (DG), 137-138 (ND), R165, D167, and 178-183 (TGYSLS).

The protein belongs to the NAD kinase family. It depends on a divalent metal cation as a cofactor.

It is found in the cytoplasm. It carries out the reaction NAD(+) + ATP = ADP + NADP(+) + H(+). Its function is as follows. Involved in the regulation of the intracellular balance of NAD and NADP, and is a key enzyme in the biosynthesis of NADP. Catalyzes specifically the phosphorylation on 2'-hydroxyl of the adenosine moiety of NAD to yield NADP. The protein is NAD kinase of Chloroherpeton thalassium (strain ATCC 35110 / GB-78).